The sequence spans 238 residues: Small ribosomal subunit protein uS2 (238 aa).

The protein belongs to the universal ribosomal protein uS2 family.

The protein is Small ribosomal subunit protein uS2 of Haemophilus ducreyi (strain 35000HP / ATCC 700724).